We begin with the raw amino-acid sequence, 355 residues long: Protein-glutamate methylesterase/protein-glutamine glutaminase (355 aa).

One can recognise a Response regulatory domain in the interval 3–121 (NVLVVEDSPV…HPDHEATARK (119 aa)). D54 carries the post-translational modification 4-aspartylphosphate. Residues 154–348 (PLLNRVAPAR…AALTNLVAER (195 aa)) form the CheB-type methylesterase domain. Residues S170, H197, and D290 contribute to the active site.

The protein belongs to the CheB family. Post-translationally, phosphorylated by CheA. Phosphorylation of the N-terminal regulatory domain activates the methylesterase activity.

It is found in the cytoplasm. The enzyme catalyses [protein]-L-glutamate 5-O-methyl ester + H2O = L-glutamyl-[protein] + methanol + H(+). The catalysed reaction is L-glutaminyl-[protein] + H2O = L-glutamyl-[protein] + NH4(+). In terms of biological role, involved in chemotaxis. Part of a chemotaxis signal transduction system that modulates chemotaxis in response to various stimuli. Catalyzes the demethylation of specific methylglutamate residues introduced into the chemoreceptors (methyl-accepting chemotaxis proteins or MCP) by CheR. Also mediates the irreversible deamidation of specific glutamine residues to glutamic acid. The protein is Protein-glutamate methylesterase/protein-glutamine glutaminase of Nitrosospira multiformis (strain ATCC 25196 / NCIMB 11849 / C 71).